The following is a 250-amino-acid chain: Bacteriorhodopsin-I (250 aa).

Transmembrane regions (helical) follow at residues 7-27 (EGIW…YFIA), 42-62 (IATI…ALGF), 81-101 (YTDW…LAGA), 114-134 (VLMI…VLSA), 139-159 (LVWW…LFSS), 185-205 (VWLV…LVGI), and 207-227 (IETA…GIIL). Lys220 is subject to N6-(retinylidene)lysine.

This sequence belongs to the archaeal/bacterial/fungal opsin family. The covalent binding of retinal to the apoprotein, bacterioopsin, generates bacteriorhodopsin.

The protein resides in the membrane. In terms of biological role, light-driven proton pump. The protein is Bacteriorhodopsin-I (bop) of Haloarcula marismortui (strain ATCC 43049 / DSM 3752 / JCM 8966 / VKM B-1809) (Halobacterium marismortui).